A 535-amino-acid polypeptide reads, in one-letter code: Thermosome subunit gamma (535 aa).

The protein belongs to the TCP-1 chaperonin family. Forms a Heterooligomeric complex of two stacked eight-membered rings.

In terms of biological role, molecular chaperone; binds unfolded polypeptides in vitro, and has a weak ATPase activity. The sequence is that of Thermosome subunit gamma (thsC) from Saccharolobus solfataricus (strain ATCC 35092 / DSM 1617 / JCM 11322 / P2) (Sulfolobus solfataricus).